We begin with the raw amino-acid sequence, 269 residues long: Tryptophan synthase alpha chain (269 aa).

Residues Glu-56 and Asp-67 each act as proton acceptor in the active site.

Belongs to the TrpA family. As to quaternary structure, tetramer of two alpha and two beta chains.

The enzyme catalyses (1S,2R)-1-C-(indol-3-yl)glycerol 3-phosphate + L-serine = D-glyceraldehyde 3-phosphate + L-tryptophan + H2O. The protein operates within amino-acid biosynthesis; L-tryptophan biosynthesis; L-tryptophan from chorismate: step 5/5. The alpha subunit is responsible for the aldol cleavage of indoleglycerol phosphate to indole and glyceraldehyde 3-phosphate. This chain is Tryptophan synthase alpha chain, found in Mycobacterium marinum (strain ATCC BAA-535 / M).